The chain runs to 118 residues: Small ribosomal subunit protein uS13 (118 aa).

The tract at residues 91 to 118 (HRRGLPVRGQRTKTNARTRKGPRKPIKK) is disordered.

It belongs to the universal ribosomal protein uS13 family. Part of the 30S ribosomal subunit. Forms a loose heterodimer with protein S19. Forms two bridges to the 50S subunit in the 70S ribosome.

Its function is as follows. Located at the top of the head of the 30S subunit, it contacts several helices of the 16S rRNA. In the 70S ribosome it contacts the 23S rRNA (bridge B1a) and protein L5 of the 50S subunit (bridge B1b), connecting the 2 subunits; these bridges are implicated in subunit movement. Contacts the tRNAs in the A and P-sites. The sequence is that of Small ribosomal subunit protein uS13 from Pectobacterium atrosepticum (strain SCRI 1043 / ATCC BAA-672) (Erwinia carotovora subsp. atroseptica).